The primary structure comprises 262 residues: Oxidoreductase GME11367 (262 aa).

It belongs to the avfA family.

Its pathway is secondary metabolite biosynthesis. Its function is as follows. Oxidoreductase; part of the gene cluster that mediates the biosynthesis of dibenzodioxocinones such as pestalotiollide B, a novel class of inhibitors against cholesterol ester transfer protein (CEPT). The biosynthesis initiates from condensation of acetate and malonate units catalyzed by the non-reducing PKS pks8/GME11356. Pks8/GME11356 lacks a thioesterase (TE) domain, which is important to the cyclizing of the third ring of atrochrysone carboxylic acid, and the esterase GME11355 might play the role of TE and catalyzes the cyclization reaction of the C ring. The lactamase-like protein GME11357 (or other beta-lactamases in Pestalotiopsis microspora) probably hydrolyzes the thioester bond between the ACP of pks8/GME11356 and the intermediate to release atrochrysone carboxylic acid, which is spontaneously dehydrates to form endocrocin anthrone. Endocrocin anthrone is further converted to emodin via the endocrocin intermediate. Emodin is then oxidized by several enzymes such as the Baeyer-Villiger oxidase GME11358, the oxidoreductase GME11367, the short chain dehydrogenase/reductase GME11373, as well as by other oxidoreductases from the cluster, to modify the A and C rings and open the B ring, and finally yield monodictyphenone. The prenyltransferase GME11375 may catalyze the addition reaction between the C5 side chains and the carbon bone of dibenzodioxocinones. The remaining biochemical reactions to the final product dibenzodioxocinones should be methylation catalyzed by methyltransferase GME11366 and reduction and lactonization reaction catalyzed by a series of oxidordeuctases. This chain is Oxidoreductase GME11367, found in Pestalotiopsis microspora.